A 492-amino-acid chain; its full sequence is Catalase isozyme 2 (492 aa).

Active-site residues include histidine 65 and asparagine 138. Tyrosine 347 is a heme binding site.

This sequence belongs to the catalase family. In terms of assembly, homotetramer. Heme is required as a cofactor. In terms of tissue distribution, high levels in green cotyledons, mature leaf, stem and green hypocotyl.

Its subcellular location is the peroxisome. It carries out the reaction 2 H2O2 = O2 + 2 H2O. Occurs in almost all aerobically respiring organisms and serves to protect cells from the toxic effects of hydrogen peroxide. The chain is Catalase isozyme 2 (CAT2) from Cucurbita pepo (Vegetable marrow).